Consider the following 561-residue polypeptide: Malto-oligosyltrehalose trehalohydrolase (561 aa).

253–258 (RLDAVH) is a binding site for substrate. D255 serves as the catalytic Nucleophile. Catalysis depends on E286, which acts as the Proton donor. Substrate-binding positions include 311–315 (DDFHH) and 379–384 (HDQVGN).

It belongs to the glycosyl hydrolase 13 family. In terms of assembly, homodimer.

It localises to the cytoplasm. It carries out the reaction hydrolysis of (1-&gt;4)-alpha-D-glucosidic linkage in 4-alpha-D-[(1-&gt;4)-alpha-D-glucanosyl]n trehalose to yield trehalose and (1-&gt;4)-alpha-D-glucan.. Its pathway is glycan biosynthesis; trehalose biosynthesis. The protein is Malto-oligosyltrehalose trehalohydrolase (treZ) of Saccharolobus solfataricus (strain ATCC 35092 / DSM 1617 / JCM 11322 / P2) (Sulfolobus solfataricus).